The sequence spans 496 residues: ADP-dependent glucokinase (496 aa).

Residues 1 to 22 form the signal peptide; sequence MALWRGSACAGFLALAVGCVFL. The ADPK domain maps to 52 to 496; that stretch reads SPESRLAAAW…GLFYSEARPD (445 aa). Residues E297, E328, and D481 each coordinate Mg(2+). Catalysis depends on D481, which acts as the Proton acceptor.

The protein belongs to the ADP-dependent glucokinase family. Monomer. The cofactor is Mg(2+).

The protein resides in the secreted. It carries out the reaction D-glucose + ADP = D-glucose 6-phosphate + AMP + H(+). The protein operates within carbohydrate degradation; glycolysis. Its function is as follows. Catalyzes the phosphorylation of D-glucose to D-glucose 6-phosphate using ADP as the phosphate donor. GDP and CDP can replace ADP, but with reduced efficiency. The chain is ADP-dependent glucokinase (Adpgk) from Mus musculus (Mouse).